A 480-amino-acid chain; its full sequence is Probable glycosyltransferase At5g25310 (480 aa).

Over 1–10 the chain is Cytoplasmic; it reads MDKFQSKFTR. Residues 11–31 traverse the membrane as a helical; Signal-anchor for type II membrane protein segment; that stretch reads FGFISICFGSIALVLLISHCS. Residues 32-480 are Lumenal-facing; the sequence is TSFFDYSFQK…WLRRLNLKLT (449 aa). Asn-85, Asn-120, Asn-243, Asn-271, and Asn-281 each carry an N-linked (GlcNAc...) asparagine glycan.

The protein belongs to the glycosyltransferase 47 family.

The protein resides in the golgi apparatus membrane. May be involved in cell wall biosynthesis. In Arabidopsis thaliana (Mouse-ear cress), this protein is Probable glycosyltransferase At5g25310.